Reading from the N-terminus, the 1470-residue chain is Actin cytoskeleton-regulatory complex protein pan1 (1470 aa).

Residues 1 to 157 form a disordered region; that stretch reads MYSSSNSFLG…PPPKSSGSKI (157 aa). The span at 25–48 shows a compositional bias: low complexity; the sequence is QPPYSQFPQGQQQIPQQTGFQPQP. A compositionally biased stretch (polar residues) spans 54–75; sequence QSASHLQPQPTGFPTGQLQPQF. Low complexity predominate over residues 77–101; sequence GFPGAAPQQQQQQLGGYQAPAQQPQ. The span at 129–139 shows a compositional bias: polar residues; that stretch reads RTSSEIANSFS. An EH 1 domain is found at 169 to 257; that stretch reads DQAKFEQLFK…DKIKNEVSSM (89 aa). Positions 201–236 constitute an EF-hand 1 domain; that stretch reads LPGSELSKIWVLSDTTKSGQLFFPEFALAMYLCNLR. Disordered stretches follow at residues 282–305 and 343–377; these read DAPL…QPSN and QATG…GPRP. Pro residues predominate over residues 292-301; the sequence is PPAPQHPKPQ. Residues 348-360 are compositionally biased toward low complexity; the sequence is PGQSQQQYLQPQP. The EH 2 domain occupies 458 to 547; sequence EKKIYDDLFR…PELIPPSTRN (90 aa). One can recognise an EF-hand 2 domain in the interval 491–526; the sequence is LDRKDLERIWTLADPNNRGRLNMDEFAVAMHLIYRK. Disordered regions lie at residues 614–641, 794–864, 886–1087, and 1099–1470; these read GYRS…SEEE, ELAG…HERR, GSRT…LKEK, and EQVR…RVLD. A compositionally biased stretch (low complexity) spans 627 to 637; the sequence is ARPSSPAASQA. A coiled-coil region spans residues 633–758; it reads AASQASEEEL…LFRLKDAKAH (126 aa). 2 stretches are compositionally biased toward basic and acidic residues: residues 809–864 and 892–910; these read AAAR…HERR and VRKE…HEEP. Residues 917–932 are compositionally biased toward low complexity; it reads LSPAPSAGSAGSLPGS. Composition is skewed to basic and acidic residues over residues 933–951, 971–1006, 1052–1087, 1099–1127, and 1134–1146; these read THED…RIAE, RQER…EEQR, AARE…LKEK, EQVR…EKEA, and AEIE…ERQL. The stretch at 963–1159 forms a coiled coil; that stretch reads DTSETLLQRQ…LEGLDEESSS (197 aa). Residues 1151–1163 are compositionally biased toward acidic residues; sequence EGLDEESSSDDEG. Polar residues predominate over residues 1169–1180; that stretch reads PEDSTPTQSQLL. Low complexity predominate over residues 1181–1195; sequence PTVTPAAPVSAPESE. Over residues 1243 to 1269 the composition is skewed to polar residues; the sequence is PNVTSPRADVHSTNPFHRLAQQESSKP. Over residues 1277 to 1286 the composition is skewed to basic and acidic residues; it reads LERKSRARPE. Residues 1340 to 1352 show a composition bias toward polar residues; sequence SKSSTPVQDSPVT. 2 stretches are compositionally biased toward pro residues: residues 1367–1380 and 1389–1433; these read AAPP…PPAA and APPP…PTPA. The WH2 domain occupies 1437 to 1454; sequence DRSALLASIQMGKGLRKV. A compositionally biased stretch (polar residues) spans 1457 to 1470; the sequence is NDRSTSSSAGRVLD.

This sequence belongs to the PAN1 family. In terms of assembly, component of the PAN1 actin cytoskeleton-regulatory complex.

It is found in the cell membrane. It localises to the endosome membrane. The protein resides in the cytoplasm. Its subcellular location is the cytoskeleton. The protein localises to the actin patch. Component of the PAN1 actin cytoskeleton-regulatory complex required for the internalization of endosomes during actin-coupled endocytosis. The complex links the site of endocytosis to the cell membrane-associated actin cytoskeleton. Mediates uptake of external molecules and vacuolar degradation of plasma membrane proteins. Plays a role in the proper organization of the cell membrane-associated actin cytoskeleton and promotes its destabilization. In Neosartorya fischeri (strain ATCC 1020 / DSM 3700 / CBS 544.65 / FGSC A1164 / JCM 1740 / NRRL 181 / WB 181) (Aspergillus fischerianus), this protein is Actin cytoskeleton-regulatory complex protein pan1 (pan1).